Here is a 347-residue protein sequence, read N- to C-terminus: ATPase GET3 (347 aa).

ATP is bound at residue 26 to 33; it reads KGGVGKTT. Residue Asp-57 is part of the active site. ATP is bound by residues Glu-240 and Asn-267. The Zn(2+) site is built by Cys-279 and Cys-282.

This sequence belongs to the arsA ATPase family. In terms of assembly, homodimer. Component of the Golgi to ER traffic (GET) complex, which is composed of GET1, GET2 and GET3. Within the complex, GET1 and GET2 form a heterotetramer which is stabilized by phosphatidylinositol binding and which binds to the GET3 homodimer. Interacts with the chloride channel protein GEF1.

It localises to the cytoplasm. Its subcellular location is the endoplasmic reticulum. The protein localises to the golgi apparatus. Its function is as follows. ATPase required for the post-translational delivery of tail-anchored (TA) proteins to the endoplasmic reticulum. Recognizes and selectively binds the transmembrane domain of TA proteins in the cytosol. This complex then targets to the endoplasmic reticulum by membrane-bound receptors GET1 and GET2, where the tail-anchored protein is released for insertion. This process is regulated by ATP binding and hydrolysis. ATP binding drives the homodimer towards the closed dimer state, facilitating recognition of newly synthesized TA membrane proteins. ATP hydrolysis is required for insertion. Subsequently, the homodimer reverts towards the open dimer state, lowering its affinity for the GET1-GET2 receptor, and returning it to the cytosol to initiate a new round of targeting. Cooperates with the HDEL receptor ERD2 to mediate the ATP-dependent retrieval of resident ER proteins that contain a C-terminal H-D-E-L retention signal from the Golgi to the ER. Involved in low-level resistance to the oxyanions arsenite and arsenate, and in heat tolerance. This is ATPase GET3 from Scheffersomyces stipitis (strain ATCC 58785 / CBS 6054 / NBRC 10063 / NRRL Y-11545) (Yeast).